Reading from the N-terminus, the 364-residue chain is D-alanine--D-alanine ligase (364 aa).

One can recognise an ATP-grasp domain in the interval 145 to 354 (KMAFEQAGLP…FPELVDKLVQ (210 aa)). 181 to 236 (EASLGYPCFVKPANLGSSVGISKVRSRQELEDALDNAANYDRRIIIEAGVAAREVE) is an ATP binding site. Mg(2+) is bound by residues Asp-307, Glu-321, and Asn-323.

The protein belongs to the D-alanine--D-alanine ligase family. Mg(2+) serves as cofactor. The cofactor is Mn(2+).

It localises to the cytoplasm. It carries out the reaction 2 D-alanine + ATP = D-alanyl-D-alanine + ADP + phosphate + H(+). It participates in cell wall biogenesis; peptidoglycan biosynthesis. Functionally, cell wall formation. This is D-alanine--D-alanine ligase from Nostoc sp. (strain PCC 7120 / SAG 25.82 / UTEX 2576).